Reading from the N-terminus, the 578-residue chain is Transmembrane protein 121B (578 aa).

Disordered stretches follow at residues 1–84 (MRPA…ESLS) and 106–129 (AGPA…PTSS). Composition is skewed to low complexity over residues 8–17 (PRSVSSASGS) and 44–53 (GDSSTSTSTS). A compositionally biased stretch (gly residues) spans 54 to 67 (RGGGGGRRGGGGGS). Position 167 is a phosphoserine (S167). The interval 529–557 (RARGGYGAPPSAPPPPPPPPQGGSQLGHC) is disordered. Positions 538–549 (PSAPPPPPPPPQ) are enriched in pro residues. S552 is modified (phosphoserine).

This sequence belongs to the TMEM121 family. In terms of tissue distribution, widely expressed, especially in adult heart, brain, prostate, testes, peripherical blood leukocytes and fetal brain.

This chain is Transmembrane protein 121B, found in Homo sapiens (Human).